A 149-amino-acid polypeptide reads, in one-letter code: MHCPFCFAVDTKVIDSRLVGGGSSVRRRRQCLVCNERFTTFEVAELVMPRVVKSNDVREPFNEEKLRSGMLRALEKRPVSSDDVEMAINHIKSQLRATGEREVPSKMIGNLVMEQLKKLDKVAYIRFASVYRSFEDIKEFGEEIARLED.

A zinc finger lies at 3–34; the sequence is CPFCFAVDTKVIDSRLVGGGSSVRRRRQCLVC. An ATP-cone domain is found at 49–139; it reads PRVVKSNDVR…VYRSFEDIKE (91 aa).

Belongs to the NrdR family. Zn(2+) serves as cofactor.

Negatively regulates transcription of bacterial ribonucleotide reductase nrd genes and operons by binding to NrdR-boxes. This chain is Transcriptional repressor NrdR, found in Shigella boydii serotype 18 (strain CDC 3083-94 / BS512).